The primary structure comprises 165 residues: Probable velvet family sexual development regulator CC1G_12219 (165 aa).

The Velvet domain maps to 1–121 (MSNTDAQTSF…SVWGAQVNVR (121 aa)).

The protein belongs to the velvet family.

The protein resides in the nucleus. Velvet-domain-containing protein that probably acts as a positive regulator of sexual development. The polypeptide is Probable velvet family sexual development regulator CC1G_12219 (Coprinopsis cinerea (strain Okayama-7 / 130 / ATCC MYA-4618 / FGSC 9003) (Inky cap fungus)).